The following is a 692-amino-acid chain: Elongation factor G (692 aa).

One can recognise a tr-type G domain in the interval 8–283; that stretch reads NRIRNIGIAA…AVIDYLPAPT (276 aa). Residues 17 to 24, 81 to 85, and 135 to 138 each bind GTP; these read AHIDAGKT, DTPGH, and NKMD.

The protein belongs to the TRAFAC class translation factor GTPase superfamily. Classic translation factor GTPase family. EF-G/EF-2 subfamily.

It is found in the cytoplasm. In terms of biological role, catalyzes the GTP-dependent ribosomal translocation step during translation elongation. During this step, the ribosome changes from the pre-translocational (PRE) to the post-translocational (POST) state as the newly formed A-site-bound peptidyl-tRNA and P-site-bound deacylated tRNA move to the P and E sites, respectively. Catalyzes the coordinated movement of the two tRNA molecules, the mRNA and conformational changes in the ribosome. The chain is Elongation factor G from Helicobacter pylori (strain HPAG1).